Here is a 719-residue protein sequence, read N- to C-terminus: Ribosomal RNA large subunit methyltransferase K/L (719 aa).

Residues 43 to 154 form the THUMP domain; the sequence is IGYKACLWSR…KGKANITLDL (112 aa).

Belongs to the methyltransferase superfamily. RlmKL family.

It is found in the cytoplasm. It catalyses the reaction guanosine(2445) in 23S rRNA + S-adenosyl-L-methionine = N(2)-methylguanosine(2445) in 23S rRNA + S-adenosyl-L-homocysteine + H(+). It carries out the reaction guanosine(2069) in 23S rRNA + S-adenosyl-L-methionine = N(2)-methylguanosine(2069) in 23S rRNA + S-adenosyl-L-homocysteine + H(+). Its function is as follows. Specifically methylates the guanine in position 2445 (m2G2445) and the guanine in position 2069 (m7G2069) of 23S rRNA. The protein is Ribosomal RNA large subunit methyltransferase K/L of Aeromonas salmonicida (strain A449).